The primary structure comprises 537 residues: Proline--tRNA ligase (537 aa).

Belongs to the class-II aminoacyl-tRNA synthetase family. ProS type 3 subfamily. In terms of assembly, homodimer.

It localises to the cytoplasm. The enzyme catalyses tRNA(Pro) + L-proline + ATP = L-prolyl-tRNA(Pro) + AMP + diphosphate. Catalyzes the attachment of proline to tRNA(Pro) in a two-step reaction: proline is first activated by ATP to form Pro-AMP and then transferred to the acceptor end of tRNA(Pro). The protein is Proline--tRNA ligase of Nanoarchaeum equitans (strain Kin4-M).